The following is an 89-amino-acid chain: Small ribosomal subunit protein uS15 (89 aa).

Belongs to the universal ribosomal protein uS15 family. In terms of assembly, part of the 30S ribosomal subunit. Forms a bridge to the 50S subunit in the 70S ribosome, contacting the 23S rRNA.

Its function is as follows. One of the primary rRNA binding proteins, it binds directly to 16S rRNA where it helps nucleate assembly of the platform of the 30S subunit by binding and bridging several RNA helices of the 16S rRNA. Forms an intersubunit bridge (bridge B4) with the 23S rRNA of the 50S subunit in the ribosome. In Sulfurovum sp. (strain NBC37-1), this protein is Small ribosomal subunit protein uS15.